A 277-amino-acid chain; its full sequence is Inositol monophosphatase 1 (277 aa).

Mg(2+)-binding residues include E70, D90, I92, and D93. E70 provides a ligand contact to substrate. Residue I92–T95 coordinates substrate. T168 is modified (phosphothreonine). Substrate-binding positions include G194 to A196, E213, and D220. Residue D220 participates in Mg(2+) binding.

The protein belongs to the inositol monophosphatase superfamily. In terms of assembly, homodimer. Mg(2+) serves as cofactor. The N-terminus is blocked.

The protein localises to the cytoplasm. It carries out the reaction a myo-inositol phosphate + H2O = myo-inositol + phosphate. The catalysed reaction is 1D-myo-inositol 1-phosphate + H2O = myo-inositol + phosphate. It catalyses the reaction 1D-myo-inositol 2-phosphate + H2O = myo-inositol + phosphate. The enzyme catalyses 1D-myo-inositol 3-phosphate + H2O = myo-inositol + phosphate. It carries out the reaction 1D-myo-inositol 4-phosphate + H2O = myo-inositol + phosphate. The catalysed reaction is 1D-myo-inositol 5-phosphate + H2O = myo-inositol + phosphate. It catalyses the reaction 1D-myo-inositol 6-phosphate + H2O = myo-inositol + phosphate. The enzyme catalyses scyllo-inositol 1-phosphate + H2O = scyllo-inositol + phosphate. It carries out the reaction alpha-D-galactose 1-phosphate + H2O = D-galactose + phosphate. The catalysed reaction is alpha-D-glucose 1-phosphate + H2O = D-glucose + phosphate. It catalyses the reaction D-glucose 6-phosphate + H2O = D-glucose + phosphate. The enzyme catalyses beta-D-fructose 1-phosphate + H2O = D-fructose + phosphate. It carries out the reaction glycerol 2-phosphate + H2O = glycerol + phosphate. The catalysed reaction is adenosine 2'-phosphate + H2O = adenosine + phosphate. It functions in the pathway polyol metabolism; myo-inositol biosynthesis; myo-inositol from D-glucose 6-phosphate: step 2/2. Activity with myo-inositol monophosphate and D-galactose 1-phosphate is inhibited by Li(+), Ca(2+) and Mn(2+), but also by Mg(2+) at concentrations above 3 mM. In terms of biological role, phosphatase involved in the dephosphorylation of myo-inositol monophosphate to generate myo-inositol. Is also able to dephosphorylate scyllo-inositol-phosphate, myo-inositol 1,4-diphosphate, scyllo-inositol-1,3-diphosphate and scyllo-inositol-1,4-diphosphate. Also dephosphorylates in vitro other sugar-phosphates including D-galactose-1-phosphate, glucose-1-phosphate, glucose-6-phosphate, fructose-1-phosphate, beta-glycerophosphate and 2'-AMP. Responsible for the provision of inositol required for synthesis of phosphatidylinositol and polyphosphoinositides, and involved in maintaining normal brain function. Has been implicated as the pharmacological target for lithium Li(+) action in brain. Is equally active with myo-inositol monophosphate and D-galactose 1-phosphate. In Bos taurus (Bovine), this protein is Inositol monophosphatase 1 (IMPA1).